A 160-amino-acid chain; its full sequence is Serine-protein kinase RsbW (160 aa).

Belongs to the anti-sigma-factor family.

It carries out the reaction L-seryl-[protein] + ATP = O-phospho-L-seryl-[protein] + ADP + H(+). It catalyses the reaction L-threonyl-[protein] + ATP = O-phospho-L-threonyl-[protein] + ADP + H(+). Functionally, negative regulator of sigma-B activity. Phosphorylates and inactivates its specific antagonist protein, RsbV. Upon phosphorylation of RsbV, RsbW is released and binds to sigma-B, thereby blocking its ability to form an RNA polymerase holoenzyme (E-sigma-B). This chain is Serine-protein kinase RsbW, found in Bacillus cereus (strain AH187).